Consider the following 257-residue polypeptide: Cytochrome c oxidase subunit 3 (257 aa).

A run of 6 helical transmembrane segments spans residues 13–33, 36–56, 80–100, 154–174, 195–215, and 237–257; these read PWPITSSISALSLTLGFVSYF, LSMYLILLAVLMITISSFQWW, GMILFILSEVFFFVSFFWAFF, YISALNSLLITILLGVAFTMF, FFMTTGFHGLHVLIGSIFLLV, and AWYWHFVDVVWLFLFTFMYWW.

Belongs to the cytochrome c oxidase subunit 3 family. Component of the cytochrome c oxidase (complex IV, CIV), a multisubunit enzyme composed of a catalytic core of 3 subunits and several supernumerary subunits. The complex exists as a monomer or a dimer and forms supercomplexes (SCs) in the inner mitochondrial membrane with ubiquinol-cytochrome c oxidoreductase (cytochrome b-c1 complex, complex III, CIII).

It localises to the mitochondrion inner membrane. The catalysed reaction is 4 Fe(II)-[cytochrome c] + O2 + 8 H(+)(in) = 4 Fe(III)-[cytochrome c] + 2 H2O + 4 H(+)(out). Its function is as follows. Component of the cytochrome c oxidase, the last enzyme in the mitochondrial electron transport chain which drives oxidative phosphorylation. The respiratory chain contains 3 multisubunit complexes succinate dehydrogenase (complex II, CII), ubiquinol-cytochrome c oxidoreductase (cytochrome b-c1 complex, complex III, CIII) and cytochrome c oxidase (complex IV, CIV), that cooperate to transfer electrons derived from NADH and succinate to molecular oxygen, creating an electrochemical gradient over the inner membrane that drives transmembrane transport and the ATP synthase. Cytochrome c oxidase is the component of the respiratory chain that catalyzes the reduction of oxygen to water. Electrons originating from reduced cytochrome c in the intermembrane space (IMS) are transferred via the dinuclear copper A center (CU(A)) of subunit 2 and heme A of subunit 1 to the active site in subunit 1, a binuclear center (BNC) formed by heme A3 and copper B (CU(B)). The BNC reduces molecular oxygen to 2 water molecules using 4 electrons from cytochrome c in the IMS and 4 protons from the mitochondrial matrix. The protein is Cytochrome c oxidase subunit 3 (COIII) of Rhipicephalus sanguineus (Brown dog tick).